The following is a 96-amino-acid chain: Co-chaperonin GroES (96 aa).

This sequence belongs to the GroES chaperonin family. As to quaternary structure, heptamer of 7 subunits arranged in a ring. Interacts with the chaperonin GroEL.

The protein localises to the cytoplasm. Its function is as follows. Together with the chaperonin GroEL, plays an essential role in assisting protein folding. The GroEL-GroES system forms a nano-cage that allows encapsulation of the non-native substrate proteins and provides a physical environment optimized to promote and accelerate protein folding. GroES binds to the apical surface of the GroEL ring, thereby capping the opening of the GroEL channel. This Paraburkholderia phymatum (strain DSM 17167 / CIP 108236 / LMG 21445 / STM815) (Burkholderia phymatum) protein is Co-chaperonin GroES.